Here is a 339-residue protein sequence, read N- to C-terminus: tRNA N6-adenosine threonylcarbamoyltransferase (339 aa).

The Fe cation site is built by His-111 and His-115. Substrate is bound by residues 134–138 (LVSGG), Asp-167, Gly-180, and Asn-274. Asp-302 provides a ligand contact to Fe cation.

It belongs to the KAE1 / TsaD family. The cofactor is Fe(2+).

It is found in the cytoplasm. The catalysed reaction is L-threonylcarbamoyladenylate + adenosine(37) in tRNA = N(6)-L-threonylcarbamoyladenosine(37) in tRNA + AMP + H(+). In terms of biological role, required for the formation of a threonylcarbamoyl group on adenosine at position 37 (t(6)A37) in tRNAs that read codons beginning with adenine. Is involved in the transfer of the threonylcarbamoyl moiety of threonylcarbamoyl-AMP (TC-AMP) to the N6 group of A37, together with TsaE and TsaB. TsaD likely plays a direct catalytic role in this reaction. The protein is tRNA N6-adenosine threonylcarbamoyltransferase of Methylobacillus flagellatus (strain ATCC 51484 / DSM 6875 / VKM B-1610 / KT).